The sequence spans 340 residues: DNA-directed RNA polymerase subunit alpha (340 aa).

The tract at residues 1–233 is alpha N-terminal domain (alpha-NTD); the sequence is MIQDEIKVST…DLFIPLINSE (233 aa). An alpha C-terminal domain (alpha-CTD) region spans residues 265 to 340; the sequence is TKDVAFKHIF…IQLPKNKNYL (76 aa).

The protein belongs to the RNA polymerase alpha chain family. As to quaternary structure, in plastids the minimal PEP RNA polymerase catalytic core is composed of four subunits: alpha, beta, beta', and beta''. When a (nuclear-encoded) sigma factor is associated with the core the holoenzyme is formed, which can initiate transcription.

It is found in the plastid. It localises to the chloroplast. The enzyme catalyses RNA(n) + a ribonucleoside 5'-triphosphate = RNA(n+1) + diphosphate. Its function is as follows. DNA-dependent RNA polymerase catalyzes the transcription of DNA into RNA using the four ribonucleoside triphosphates as substrates. The protein is DNA-directed RNA polymerase subunit alpha of Marchantia polymorpha (Common liverwort).